Consider the following 57-residue polypeptide: Small ribosomal subunit protein bS21 (57 aa).

The segment at 35-57 (RERYEKPSLRRKRKQEAARKRNR) is disordered.

This sequence belongs to the bacterial ribosomal protein bS21 family.

In Thermosynechococcus vestitus (strain NIES-2133 / IAM M-273 / BP-1), this protein is Small ribosomal subunit protein bS21.